A 389-amino-acid polypeptide reads, in one-letter code: Leucine aminopeptidase 1 (389 aa).

Residues M1–A18 form the signal peptide. Positions A19–S89 are excised as a propeptide. N99, N156, and N180 each carry an N-linked (GlcNAc...) asparagine glycan. Zn(2+) is bound by residues H188, D207, E246, and D273. C322 and C326 are disulfide-bonded. H355 contributes to the Zn(2+) binding site.

The protein belongs to the peptidase M28 family. M28E subfamily. In terms of assembly, monomer. Zn(2+) is required as a cofactor.

The protein localises to the secreted. In terms of biological role, extracellular aminopeptidase that allows assimilation of proteinaceous substrates. This Phaeosphaeria nodorum (strain SN15 / ATCC MYA-4574 / FGSC 10173) (Glume blotch fungus) protein is Leucine aminopeptidase 1 (LAP1).